Reading from the N-terminus, the 199-residue chain is Putative 3-methyladenine DNA glycosylase (199 aa).

This sequence belongs to the DNA glycosylase MPG family.

The polypeptide is Putative 3-methyladenine DNA glycosylase (Chlorobium phaeobacteroides (strain BS1)).